The following is a 278-amino-acid chain: ATP synthase subunit delta (278 aa).

It belongs to the ATPase delta chain family. In terms of assembly, F-type ATPases have 2 components, F(1) - the catalytic core - and F(0) - the membrane proton channel. F(1) has five subunits: alpha(3), beta(3), gamma(1), delta(1), epsilon(1). F(0) has three main subunits: a(1), b(2) and c(10-14). The alpha and beta chains form an alternating ring which encloses part of the gamma chain. F(1) is attached to F(0) by a central stalk formed by the gamma and epsilon chains, while a peripheral stalk is formed by the delta and b chains.

The protein resides in the cell membrane. Functionally, f(1)F(0) ATP synthase produces ATP from ADP in the presence of a proton or sodium gradient. F-type ATPases consist of two structural domains, F(1) containing the extramembraneous catalytic core and F(0) containing the membrane proton channel, linked together by a central stalk and a peripheral stalk. During catalysis, ATP synthesis in the catalytic domain of F(1) is coupled via a rotary mechanism of the central stalk subunits to proton translocation. Its function is as follows. This protein is part of the stalk that links CF(0) to CF(1). It either transmits conformational changes from CF(0) to CF(1) or is implicated in proton conduction. The chain is ATP synthase subunit delta from Rhodococcus opacus (strain B4).